The primary structure comprises 732 residues: DNA ligase (732 aa).

NAD(+) contacts are provided by residues 47–51, 96–97, and Glu-133; these read DAEYD and SI. Catalysis depends on Lys-135, which acts as the N6-AMP-lysine intermediate. Residues Arg-156, Glu-196, Lys-317, and Lys-341 each contribute to the NAD(+) site. Residues Cys-470, Cys-473, Cys-488, and Cys-494 each coordinate Zn(2+). One can recognise a BRCT domain in the interval 653–732; the sequence is RATLPLAGKT…AGMLALLQGR (80 aa).

It belongs to the NAD-dependent DNA ligase family. LigA subfamily. Requires Mg(2+) as cofactor. The cofactor is Mn(2+).

The enzyme catalyses NAD(+) + (deoxyribonucleotide)n-3'-hydroxyl + 5'-phospho-(deoxyribonucleotide)m = (deoxyribonucleotide)n+m + AMP + beta-nicotinamide D-nucleotide.. DNA ligase that catalyzes the formation of phosphodiester linkages between 5'-phosphoryl and 3'-hydroxyl groups in double-stranded DNA using NAD as a coenzyme and as the energy source for the reaction. It is essential for DNA replication and repair of damaged DNA. The protein is DNA ligase of Paracidovorax citrulli (strain AAC00-1) (Acidovorax citrulli).